The chain runs to 75 residues: UPF0352 protein ETA_12580 (75 aa).

This sequence belongs to the UPF0352 family.

This is UPF0352 protein ETA_12580 from Erwinia tasmaniensis (strain DSM 17950 / CFBP 7177 / CIP 109463 / NCPPB 4357 / Et1/99).